The primary structure comprises 571 residues: Penicillin-binding protein activator LpoA (571 aa).

The signal sequence occupies residues 1–26 (MMTILLQHTHLKNRLMPFLLALFLAG). Cysteine 27 is lipidated: N-palmitoyl cysteine. A lipid anchor (S-diacylglycerol cysteine) is attached at cysteine 27.

It belongs to the LpoA family. In terms of assembly, interacts with PBP1a.

Its subcellular location is the cell outer membrane. Regulator of peptidoglycan synthesis that is essential for the function of penicillin-binding protein 1A (PBP1a). The polypeptide is Penicillin-binding protein activator LpoA (Pasteurella multocida (strain Pm70)).